The following is a 102-amino-acid chain: MQKARIKLSSTSYQELDGVCNNIKTIAEKTGVDMAGPIPLPTKTLKVTTRKSTDGEGSSSFDRWTMRVHKRVIDIEADERTMKHIMKIRIPEAVQIEIELRS.

The tract at residues 34-61 is disordered; the sequence is MAGPIPLPTKTLKVTTRKSTDGEGSSSF.

The protein belongs to the universal ribosomal protein uS10 family. As to quaternary structure, part of the 30S ribosomal subunit.

Involved in the binding of tRNA to the ribosomes. This chain is Small ribosomal subunit protein uS10, found in Methanococcus aeolicus (strain ATCC BAA-1280 / DSM 17508 / OCM 812 / Nankai-3).